We begin with the raw amino-acid sequence, 89 residues long: Small ribosomal subunit protein uS15 (89 aa).

The protein belongs to the universal ribosomal protein uS15 family. Part of the 30S ribosomal subunit. Forms a bridge to the 50S subunit in the 70S ribosome, contacting the 23S rRNA.

One of the primary rRNA binding proteins, it binds directly to 16S rRNA where it helps nucleate assembly of the platform of the 30S subunit by binding and bridging several RNA helices of the 16S rRNA. Its function is as follows. Forms an intersubunit bridge (bridge B4) with the 23S rRNA of the 50S subunit in the ribosome. This chain is Small ribosomal subunit protein uS15, found in Desulfatibacillum aliphaticivorans.